A 580-amino-acid polypeptide reads, in one-letter code: NADH-quinone oxidoreductase subunit C/D (580 aa).

Residues 1–171 (MSLDQAIPEA…PPFVLTDRLF (171 aa)) form an NADH dehydrogenase I subunit C region. The NADH dehydrogenase I subunit D stretch occupies residues 195-580 (ELMVLNFGPH…IDFVMSDVDR (386 aa)).

In the N-terminal section; belongs to the complex I 30 kDa subunit family. This sequence in the C-terminal section; belongs to the complex I 49 kDa subunit family. In terms of assembly, NDH-1 is composed of 13 different subunits. Subunits NuoB, CD, E, F, and G constitute the peripheral sector of the complex.

It is found in the cell inner membrane. The enzyme catalyses a quinone + NADH + 5 H(+)(in) = a quinol + NAD(+) + 4 H(+)(out). Functionally, NDH-1 shuttles electrons from NADH, via FMN and iron-sulfur (Fe-S) centers, to quinones in the respiratory chain. The immediate electron acceptor for the enzyme in this species is believed to be ubiquinone. Couples the redox reaction to proton translocation (for every two electrons transferred, four hydrogen ions are translocated across the cytoplasmic membrane), and thus conserves the redox energy in a proton gradient. This is NADH-quinone oxidoreductase subunit C/D from Cereibacter sphaeroides (strain KD131 / KCTC 12085) (Rhodobacter sphaeroides).